A 510-amino-acid polypeptide reads, in one-letter code: GMP synthase [glutamine-hydrolyzing] (510 aa).

The Glutamine amidotransferase type-1 domain occupies 5 to 195 (KILVLDFGGQ…LFKVCGVKGT (191 aa)). The active-site Nucleophile is the Cys-82. Active-site residues include His-169 and Glu-171. The region spanning 196–385 (WNMADFINEE…LGLPDEIVWR (190 aa)) is the GMPS ATP-PPase domain. Position 223-229 (223-229 (SGGVDSA)) interacts with ATP.

Homodimer.

It catalyses the reaction XMP + L-glutamine + ATP + H2O = GMP + L-glutamate + AMP + diphosphate + 2 H(+). Its pathway is purine metabolism; GMP biosynthesis; GMP from XMP (L-Gln route): step 1/1. Its function is as follows. Catalyzes the synthesis of GMP from XMP. The polypeptide is GMP synthase [glutamine-hydrolyzing] (Halothermothrix orenii (strain H 168 / OCM 544 / DSM 9562)).